Reading from the N-terminus, the 303-residue chain is tRNA dimethylallyltransferase (303 aa).

ATP is bound at residue 9–16; sequence GPTASGKS. 11-16 contacts substrate; sequence TASGKS. The interaction with substrate tRNA stretch occupies residues 34 to 37; sequence DSKQ.

It belongs to the IPP transferase family. Monomer. Mg(2+) is required as a cofactor.

The catalysed reaction is adenosine(37) in tRNA + dimethylallyl diphosphate = N(6)-dimethylallyladenosine(37) in tRNA + diphosphate. Functionally, catalyzes the transfer of a dimethylallyl group onto the adenine at position 37 in tRNAs that read codons beginning with uridine, leading to the formation of N6-(dimethylallyl)adenosine (i(6)A). The sequence is that of tRNA dimethylallyltransferase from Ehrlichia chaffeensis (strain ATCC CRL-10679 / Arkansas).